The primary structure comprises 242 residues: ATP synthase subunit a, organellar chromatophore (242 aa).

5 helical membrane-spanning segments follow: residues 28-48, 89-109, 128-148, 193-213, and 214-234; these read LHGQVFISSWVVISALLVLVI, LPFIGTLFLFIFGCNWGGALV, INTTVAMALLVSLSYFYAGLS, LVVGVLAFLVPILVPLPAMFL, and GLFTSAIQALIFATLAANYIG.

This sequence belongs to the ATPase A chain family. As to quaternary structure, F-type ATPases have 2 components, CF(1) - the catalytic core - and CF(0) - the membrane proton channel. CF(1) has five subunits: alpha(3), beta(3), gamma(1), delta(1), epsilon(1). CF(0) has four main subunits: a, b, b' and c.

The protein resides in the plastid. The protein localises to the organellar chromatophore thylakoid membrane. In terms of biological role, key component of the proton channel; it plays a direct role in the translocation of protons across the membrane. This chain is ATP synthase subunit a, organellar chromatophore, found in Paulinella chromatophora.